An 85-amino-acid chain; its full sequence is MAKAGGITNAVNVGIAVQADWENREFISHISLNVRRLFEFLVQFESTTKSKLASLNEKLDLLERRLEMLEVQVSTATANPSLFAT.

Residues Glu45–Asn79 are a coiled coil.

The protein belongs to the BRK1 family. In terms of assembly, binds SCAR1 and/or SCAR2 and/or SCAR3. Expressed in roots, root hairs, hypocotyls, cotyledons, stems, leaves, trichomes, and flowers.

It is found in the cytoplasm. Its subcellular location is the cytoskeleton. Functionally, involved in regulation of actin and microtubule organization. Part of a WAVE complex that activates the Arp2/3 complex. This is Protein BRICK 1 (BRK1) from Arabidopsis thaliana (Mouse-ear cress).